Consider the following 507-residue polypeptide: tRNA-2-methylthio-N(6)-dimethylallyladenosine synthase (507 aa).

An MTTase N-terminal domain is found at 13–129; that stretch reads RTYQVRTYGC…LPALLERARH (117 aa). C22, C58, C92, C166, C170, and C173 together coordinate [4Fe-4S] cluster. In terms of domain architecture, Radical SAM core spans 152–388; that stretch reads RESAYAAWVS…IALQESVTLE (237 aa). The TRAM domain maps to 391–462; the sequence is QKQIGRMIEV…PHHLIADDGV (72 aa). Residues 459–478 show a composition bias toward basic and acidic residues; the sequence is DDGVRSHRRTRAGDAHEAGK. Positions 459–492 are disordered; that stretch reads DDGVRSHRRTRAGDAHEAGKKPSTPGIGLGMPAI.

The protein belongs to the methylthiotransferase family. MiaB subfamily. In terms of assembly, monomer. The cofactor is [4Fe-4S] cluster.

The protein localises to the cytoplasm. The catalysed reaction is N(6)-dimethylallyladenosine(37) in tRNA + (sulfur carrier)-SH + AH2 + 2 S-adenosyl-L-methionine = 2-methylsulfanyl-N(6)-dimethylallyladenosine(37) in tRNA + (sulfur carrier)-H + 5'-deoxyadenosine + L-methionine + A + S-adenosyl-L-homocysteine + 2 H(+). Catalyzes the methylthiolation of N6-(dimethylallyl)adenosine (i(6)A), leading to the formation of 2-methylthio-N6-(dimethylallyl)adenosine (ms(2)i(6)A) at position 37 in tRNAs that read codons beginning with uridine. This is tRNA-2-methylthio-N(6)-dimethylallyladenosine synthase from Mycobacteroides abscessus (strain ATCC 19977 / DSM 44196 / CCUG 20993 / CIP 104536 / JCM 13569 / NCTC 13031 / TMC 1543 / L948) (Mycobacterium abscessus).